A 31-amino-acid chain; its full sequence is Cytochrome b6-f complex subunit 6 (31 aa).

A helical membrane pass occupies residues 4–24 (ITSYFGFLLVALTITSALFIG).

It belongs to the PetL family. In terms of assembly, the 4 large subunits of the cytochrome b6-f complex are cytochrome b6, subunit IV (17 kDa polypeptide, PetD), cytochrome f and the Rieske protein, while the 4 small subunits are PetG, PetL, PetM and PetN. The complex functions as a dimer.

It is found in the plastid. The protein localises to the chloroplast thylakoid membrane. Functionally, component of the cytochrome b6-f complex, which mediates electron transfer between photosystem II (PSII) and photosystem I (PSI), cyclic electron flow around PSI, and state transitions. PetL is important for photoautotrophic growth as well as for electron transfer efficiency and stability of the cytochrome b6-f complex. The protein is Cytochrome b6-f complex subunit 6 of Panax ginseng (Korean ginseng).